Reading from the N-terminus, the 248-residue chain is Pyridoxine 5'-phosphate synthase (248 aa).

Position 12 (Asn12) interacts with 3-amino-2-oxopropyl phosphate. 14 to 15 is a 1-deoxy-D-xylulose 5-phosphate binding site; that stretch reads DH. Residue Arg23 coordinates 3-amino-2-oxopropyl phosphate. Catalysis depends on His48, which acts as the Proton acceptor. 2 residues coordinate 1-deoxy-D-xylulose 5-phosphate: Arg50 and His55. Catalysis depends on Glu75, which acts as the Proton acceptor. Position 105 (Thr105) interacts with 1-deoxy-D-xylulose 5-phosphate. The active-site Proton donor is the His196. 3-amino-2-oxopropyl phosphate is bound by residues Gly197 and 218-219; that span reads GH.

It belongs to the PNP synthase family. In terms of assembly, homooctamer; tetramer of dimers.

Its subcellular location is the cytoplasm. It catalyses the reaction 3-amino-2-oxopropyl phosphate + 1-deoxy-D-xylulose 5-phosphate = pyridoxine 5'-phosphate + phosphate + 2 H2O + H(+). It functions in the pathway cofactor biosynthesis; pyridoxine 5'-phosphate biosynthesis; pyridoxine 5'-phosphate from D-erythrose 4-phosphate: step 5/5. Its function is as follows. Catalyzes the complicated ring closure reaction between the two acyclic compounds 1-deoxy-D-xylulose-5-phosphate (DXP) and 3-amino-2-oxopropyl phosphate (1-amino-acetone-3-phosphate or AAP) to form pyridoxine 5'-phosphate (PNP) and inorganic phosphate. The sequence is that of Pyridoxine 5'-phosphate synthase from Pseudomonas aeruginosa (strain LESB58).